The primary structure comprises 1150 residues: PAN2-PAN3 deadenylation complex catalytic subunit pan2 (1150 aa).

WD repeat units follow at residues 96-139 (AHEE…DKLH) and 270-309 (ANVSFMLGIDLSPSGEALAINDAECAIHLWGSPAKVHFNE). The tract at residues 310 to 446 (MSKEAEFGDV…GAKINGETDD (137 aa)) is linker. The region spanning 447 to 816 (DPLLKYSNVE…IPCVLAYQVQ (370 aa)) is the USP domain. Residues 865 to 1043 (VALDTEFVDL…IEDARMALRL (179 aa)) form the Exonuclease domain. Residues D868, E870, D977, and D1036 each coordinate a divalent metal cation. The interval 1074–1150 (PPPRNGVPTV…GDFFSGSPLK (77 aa)) is disordered. Polar residues predominate over residues 1091 to 1106 (VTMQNNSGRNTPSTSD). The segment covering 1108 to 1120 (AGAAASAPATPRQ) has biased composition (low complexity).

Belongs to the peptidase C19 family. PAN2 subfamily. Forms a heterotrimer with an asymmetric homodimer of the regulatory subunit pan3 to form the poly(A)-nuclease (PAN) deadenylation complex. A divalent metal cation serves as cofactor.

The protein resides in the cytoplasm. It carries out the reaction Exonucleolytic cleavage of poly(A) to 5'-AMP.. Positively regulated by the regulatory subunit pan3. Functionally, catalytic subunit of the poly(A)-nuclease (PAN) deadenylation complex, one of two cytoplasmic mRNA deadenylases involved in mRNA turnover. PAN specifically shortens poly(A) tails of RNA and the activity is stimulated by poly(A)-binding protein pab1. PAN deadenylation is followed by rapid degradation of the shortened mRNA tails by the CCR4-NOT complex. Deadenylated mRNAs are then degraded by two alternative mechanisms, namely exosome-mediated 3'-5' exonucleolytic degradation, or deadenylation-dependent mRNA decaping and subsequent 5'-3' exonucleolytic degradation by xrn1. May also be involved in post-transcriptional maturation of mRNA poly(A) tails. This chain is PAN2-PAN3 deadenylation complex catalytic subunit pan2, found in Aspergillus niger (strain ATCC MYA-4892 / CBS 513.88 / FGSC A1513).